A 154-amino-acid chain; its full sequence is 6,7-dimethyl-8-ribityllumazine synthase (154 aa).

Residues F24, 56 to 58, and 80 to 82 each bind 5-amino-6-(D-ribitylamino)uracil; these read SFE and AVV. 85–86 lines the (2S)-2-hydroxy-3-oxobutyl phosphate pocket; the sequence is ET. The active-site Proton donor is the H88. F113 is a binding site for 5-amino-6-(D-ribitylamino)uracil. (2S)-2-hydroxy-3-oxobutyl phosphate is bound at residue R127.

The protein belongs to the DMRL synthase family.

The enzyme catalyses (2S)-2-hydroxy-3-oxobutyl phosphate + 5-amino-6-(D-ribitylamino)uracil = 6,7-dimethyl-8-(1-D-ribityl)lumazine + phosphate + 2 H2O + H(+). The protein operates within cofactor biosynthesis; riboflavin biosynthesis; riboflavin from 2-hydroxy-3-oxobutyl phosphate and 5-amino-6-(D-ribitylamino)uracil: step 1/2. Catalyzes the formation of 6,7-dimethyl-8-ribityllumazine by condensation of 5-amino-6-(D-ribitylamino)uracil with 3,4-dihydroxy-2-butanone 4-phosphate. This is the penultimate step in the biosynthesis of riboflavin. The chain is 6,7-dimethyl-8-ribityllumazine synthase from Thermococcus gammatolerans (strain DSM 15229 / JCM 11827 / EJ3).